A 120-amino-acid polypeptide reads, in one-letter code: Ribonuclease P protein component (120 aa).

This sequence belongs to the RnpA family. As to quaternary structure, consists of a catalytic RNA component (M1 or rnpB) and a protein subunit.

The enzyme catalyses Endonucleolytic cleavage of RNA, removing 5'-extranucleotides from tRNA precursor.. Its function is as follows. RNaseP catalyzes the removal of the 5'-leader sequence from pre-tRNA to produce the mature 5'-terminus. It can also cleave other RNA substrates such as 4.5S RNA. The protein component plays an auxiliary but essential role in vivo by binding to the 5'-leader sequence and broadening the substrate specificity of the ribozyme. The protein is Ribonuclease P protein component of Dehalococcoides mccartyi (strain ATCC BAA-2266 / KCTC 15142 / 195) (Dehalococcoides ethenogenes (strain 195)).